Here is a 277-residue protein sequence, read N- to C-terminus: Large ribosomal subunit protein uL2 (277 aa).

Residues Gly-222–Lys-277 form a disordered region.

This sequence belongs to the universal ribosomal protein uL2 family. In terms of assembly, part of the 50S ribosomal subunit. Forms a bridge to the 30S subunit in the 70S ribosome.

Its function is as follows. One of the primary rRNA binding proteins. Required for association of the 30S and 50S subunits to form the 70S ribosome, for tRNA binding and peptide bond formation. It has been suggested to have peptidyltransferase activity; this is somewhat controversial. Makes several contacts with the 16S rRNA in the 70S ribosome. The chain is Large ribosomal subunit protein uL2 from Bartonella quintana (strain Toulouse) (Rochalimaea quintana).